A 341-amino-acid chain; its full sequence is MTKDILILAVETSCDETSVSVIKNGRDILSNTVLSQIESHKRFGGVVPEVASRHHVEGITATINEALGDADVSIEDIDAIAVTEGPGLIGALLIGVNAAKALAFAYDKPLIPVHHIAGHIYANHIEEPLTFPLIALIVSGGHTELVYMKDHLSFEVIGETRDDAVGEAYDKVARTIGLNYPGGPQVDRLAAEGEDTYSFPRVWLDKDSYDFSFSGLKSAVINQLHNQRQKNIPIIEANVATSFQNSVVEVLTFKAIQACKEYGVQRLIVAGGVASNKGLRQSLADQCKVNDIQLTIPSPKLCTDNAAMIGVAGHYLYQQGRFADLALNGHSNIDLEEYSAE.

The Fe cation site is built by H115 and H119. Residues 137–141, D170, G183, D187, and N276 each bind substrate; that span reads IVSGG. Position 304 (D304) interacts with Fe cation.

This sequence belongs to the KAE1 / TsaD family. It depends on Fe(2+) as a cofactor.

Its subcellular location is the cytoplasm. The enzyme catalyses L-threonylcarbamoyladenylate + adenosine(37) in tRNA = N(6)-L-threonylcarbamoyladenosine(37) in tRNA + AMP + H(+). Required for the formation of a threonylcarbamoyl group on adenosine at position 37 (t(6)A37) in tRNAs that read codons beginning with adenine. Is involved in the transfer of the threonylcarbamoyl moiety of threonylcarbamoyl-AMP (TC-AMP) to the N6 group of A37, together with TsaE and TsaB. TsaD likely plays a direct catalytic role in this reaction. The chain is tRNA N6-adenosine threonylcarbamoyltransferase from Staphylococcus aureus (strain USA300).